Consider the following 326-residue polypeptide: RNA-binding motif protein, X-linked 2 (326 aa).

Residue Lys8 forms a Glycyl lysine isopeptide (Lys-Gly) (interchain with G-Cter in SUMO2) linkage. The RRM domain occupies Ala36–Asn114. Positions Ala117 to His326 are disordered. Thr140 is modified (phosphothreonine). Ser149 carries the post-translational modification Phosphoserine. Basic residues predominate over residues Thr157–Lys172. Over residues Gly177–Ala190 the composition is skewed to polar residues. Composition is skewed to basic and acidic residues over residues Thr191 to Ala200, Lys207 to Glu219, Ala236 to Ala245, and Lys255 to Arg273. Residue Ser274 is modified to Phosphoserine. Positions His291–Ser312 are enriched in basic residues. Positions Arg313 to His326 are enriched in basic and acidic residues.

This sequence belongs to the IST3 family. Part of the activated spliceosome B/catalytic step 1 spliceosome, one of the forms of the spliceosome which has a well-formed active site but still cannot catalyze the branching reaction and is composed of at least 52 proteins, the U2, U5 and U6 snRNAs and the pre-mRNA. Component of the minor spliceosome, which splices U12-type introns.

Its subcellular location is the nucleus. Its function is as follows. Involved in pre-mRNA splicing as component of the activated spliceosome. As a component of the minor spliceosome, involved in the splicing of U12-type introns in pre-mRNAs. This chain is RNA-binding motif protein, X-linked 2 (Rbmx2), found in Mus musculus (Mouse).